The sequence spans 769 residues: Calcium up-regulated protein B (769 aa).

The segment at 1 to 22 is disordered; that stretch reads MINIEDISKSSNQSEEKQLKST. Ricin B-type lectin domains lie at 25–145 and 158–296; these read KPKY…WTTF and FQSK…WITN.

Belongs to the cup family.

It is found in the cytoplasm. Its subcellular location is the membrane. Functionally, may play an important role in stabilizing and/or regulating the cell membrane during Ca(2+) stress or certain stages of development. The polypeptide is Calcium up-regulated protein B (cupB) (Dictyostelium discoideum (Social amoeba)).